We begin with the raw amino-acid sequence, 155 residues long: UPF0178 protein RPC_3085 (155 aa).

It belongs to the UPF0178 family.

This Rhodopseudomonas palustris (strain BisB18) protein is UPF0178 protein RPC_3085.